The chain runs to 206 residues: Peptidyl-tRNA hydrolase (206 aa).

TRNA is bound at residue Tyr-14. His-19 functions as the Proton acceptor in the catalytic mechanism. TRNA-binding residues include Tyr-64 and Asn-66. The tract at residues 182 to 206 (FNQKNKKKKEKEQPEAATDQLLENK) is disordered.

Belongs to the PTH family. As to quaternary structure, monomer.

Its subcellular location is the cytoplasm. The enzyme catalyses an N-acyl-L-alpha-aminoacyl-tRNA + H2O = an N-acyl-L-amino acid + a tRNA + H(+). Its function is as follows. Hydrolyzes ribosome-free peptidyl-tRNAs (with 1 or more amino acids incorporated), which drop off the ribosome during protein synthesis, or as a result of ribosome stalling. In terms of biological role, catalyzes the release of premature peptidyl moieties from peptidyl-tRNA molecules trapped in stalled 50S ribosomal subunits, and thus maintains levels of free tRNAs and 50S ribosomes. This chain is Peptidyl-tRNA hydrolase, found in Desulforamulus reducens (strain ATCC BAA-1160 / DSM 100696 / MI-1) (Desulfotomaculum reducens).